Consider the following 143-residue polypeptide: UPF0251 protein CA_C3166 (143 aa).

The protein belongs to the UPF0251 family.

The protein is UPF0251 protein CA_C3166 of Clostridium acetobutylicum (strain ATCC 824 / DSM 792 / JCM 1419 / IAM 19013 / LMG 5710 / NBRC 13948 / NRRL B-527 / VKM B-1787 / 2291 / W).